Reading from the N-terminus, the 137-residue chain is Ribonuclease VapC18 (137 aa).

The region spanning 4 to 126 is the PINc domain; the sequence is CVDTSAWHHA…YDRVAAITGQ (123 aa). Residues Asp-6 and Asp-96 each contribute to the Mg(2+) site.

The protein belongs to the PINc/VapC protein family. The cofactor is Mg(2+).

Toxic component of a type II toxin-antitoxin (TA) system. An RNase. The cognate antitoxin is VapB18. The sequence is that of Ribonuclease VapC18 from Mycobacterium tuberculosis (strain ATCC 25618 / H37Rv).